The primary structure comprises 706 residues: Polyribonucleotide nucleotidyltransferase (706 aa).

2 residues coordinate Mg(2+): Asp-486 and Asp-492. The KH domain occupies 553–612 (PRIHTIKISTDKIKDVIGKGGSVIRALTEETGTTIEIEDDGTVKIASTDGEKAKHAIRRI). The S1 motif domain maps to 622–690 (GRVYQGKVTR…RQGRVRLSIK (69 aa)).

This sequence belongs to the polyribonucleotide nucleotidyltransferase family. In terms of assembly, component of the RNA degradosome, which is a multiprotein complex involved in RNA processing and mRNA degradation. Requires Mg(2+) as cofactor.

It is found in the cytoplasm. It carries out the reaction RNA(n+1) + phosphate = RNA(n) + a ribonucleoside 5'-diphosphate. Functionally, involved in mRNA degradation. Catalyzes the phosphorolysis of single-stranded polyribonucleotides processively in the 3'- to 5'-direction. The chain is Polyribonucleotide nucleotidyltransferase from Pectobacterium carotovorum subsp. carotovorum (strain PC1).